Consider the following 206-residue polypeptide: Small ribosomal subunit protein uS4 (206 aa).

A disordered region spans residues 28-52; sequence YLDRRPYAPGQHGQRRGRGRPSDYS. The S4 RNA-binding domain maps to 96–171; that stretch reads RRLDNVVFRM…QKRRRVSPWI (76 aa).

It belongs to the universal ribosomal protein uS4 family. Part of the 30S ribosomal subunit. Contacts protein S5. The interaction surface between S4 and S5 is involved in control of translational fidelity.

One of the primary rRNA binding proteins, it binds directly to 16S rRNA where it nucleates assembly of the body of the 30S subunit. Functionally, with S5 and S12 plays an important role in translational accuracy. This is Small ribosomal subunit protein uS4 from Deinococcus geothermalis (strain DSM 11300 / CIP 105573 / AG-3a).